We begin with the raw amino-acid sequence, 257 residues long: Ribosome-recycling factor, mitochondrial (257 aa).

It belongs to the RRF family.

It localises to the mitochondrion. Necessary for protein synthesis in mitochondria. Functions as a ribosome recycling factor in mitochondria. This chain is Ribosome-recycling factor, mitochondrial (RRF1), found in Debaryomyces hansenii (strain ATCC 36239 / CBS 767 / BCRC 21394 / JCM 1990 / NBRC 0083 / IGC 2968) (Yeast).